Reading from the N-terminus, the 305-residue chain is Mas-related G-protein coupled receptor member A2B (305 aa).

Residues 1 to 17 are Extracellular-facing; it reads MDETLPGSINIRILIPK. Residues 18–38 traverse the membrane as a helical segment; it reads LMIIIFGLVGLMGNAIVFWLL. At 39-53 the chain is on the cytoplasmic side; the sequence is GFHLRRNAFSVYILN. The helical transmembrane segment at 54 to 74 threads the bilayer; it reads LALADFLFLLSSIIASTLFLL. Over 75-78 the chain is Extracellular; it reads KVSY. The chain crosses the membrane as a helical span at residues 79–99; the sequence is LSIIFHLCFNTIMMVVYITGI. Topologically, residues 100–132 are cytoplasmic; that stretch reads SMLSAISTECCLSVLCPTWYRCHRPVHTSTVMC. Residues 133–153 traverse the membrane as a helical segment; it reads AVIWVLSLLICILNSYFCAVL. Residues 154–167 lie on the Extracellular side of the membrane; that stretch reads HTRYDNDNECLATN. Residues 168–188 traverse the membrane as a helical segment; the sequence is IFTASYMIFLLVVLCLSSLAL. Topologically, residues 189 to 207 are cytoplasmic; the sequence is LARLFCGAGQMKLTRFHVT. A helical transmembrane segment spans residues 208 to 228; sequence ILLTLLVFLLCGLPFVIYCIL. Residues 229 to 244 lie on the Extracellular side of the membrane; that stretch reads LFKIKDDFHVLDVNFY. The chain crosses the membrane as a helical span at residues 245 to 265; the sequence is LALEVLTAINSCANPIIYFFV. Topologically, residues 266–305 are cytoplasmic; the sequence is GSFRHQLKHQTLKMVLQSALQDTPETAENMVEMSSNKAEP.

It belongs to the G-protein coupled receptor 1 family. Mas subfamily. Expressed in a subset of sensory neurons that includes nociceptors. Expressed in the subclass of non-peptidergic sensory neurons that are IB4(+) and VR1(-).

It localises to the cell membrane. Its function is as follows. Orphan receptor. May be a receptor for RFamide-family neuropeptides such as NPFF and NPAF, which are analgesic in vivo. May regulate nociceptor function and/or development, including the sensation or modulation of pain. The chain is Mas-related G-protein coupled receptor member A2B from Mus musculus (Mouse).